The following is a 119-amino-acid chain: ATP-dependent Clp protease adapter protein ClpS (119 aa).

Positions 1-33 (MATRIPKTPSTPPAQKPAGDDGDSVVLERRPQK) are disordered.

It belongs to the ClpS family. In terms of assembly, binds to the N-terminal domain of the chaperone ClpA.

Its function is as follows. Involved in the modulation of the specificity of the ClpAP-mediated ATP-dependent protein degradation. In Variovorax paradoxus (strain S110), this protein is ATP-dependent Clp protease adapter protein ClpS.